Reading from the N-terminus, the 337-residue chain is Heat-inducible transcription repressor HrcA (337 aa).

It belongs to the HrcA family.

Its function is as follows. Negative regulator of class I heat shock genes (grpE-dnaK-dnaJ and groELS operons). Prevents heat-shock induction of these operons. The polypeptide is Heat-inducible transcription repressor HrcA (Kocuria rhizophila (strain ATCC 9341 / DSM 348 / NBRC 103217 / DC2201)).